Consider the following 294-residue polypeptide: 4-hydroxy-tetrahydrodipicolinate synthase (294 aa).

Pyruvate is bound at residue Thr-47. The Proton donor/acceptor role is filled by Tyr-135. Lys-163 (schiff-base intermediate with substrate) is an active-site residue. Ile-206 serves as a coordination point for pyruvate.

The protein belongs to the DapA family. In terms of assembly, homodimer.

The protein resides in the cytoplasm. The catalysed reaction is L-aspartate 4-semialdehyde + pyruvate = (2S,4S)-4-hydroxy-2,3,4,5-tetrahydrodipicolinate + H2O + H(+). It functions in the pathway amino-acid biosynthesis; L-lysine biosynthesis via DAP pathway; (S)-tetrahydrodipicolinate from L-aspartate: step 3/4. In terms of biological role, catalyzes the condensation of (S)-aspartate-beta-semialdehyde [(S)-ASA] and pyruvate to 4-hydroxy-tetrahydrodipicolinate (HTPA). In Staphylococcus carnosus (strain TM300), this protein is 4-hydroxy-tetrahydrodipicolinate synthase.